A 364-amino-acid polypeptide reads, in one-letter code: UDP-N-acetylglucosamine--N-acetylmuramyl-(pentapeptide) pyrophosphoryl-undecaprenol N-acetylglucosamine transferase (364 aa).

UDP-N-acetyl-alpha-D-glucosamine contacts are provided by residues threonine 10–glycine 12, asparagine 126, arginine 167, serine 199, isoleucine 253, and glutamine 298.

Belongs to the glycosyltransferase 28 family. MurG subfamily.

It localises to the cell inner membrane. The catalysed reaction is di-trans,octa-cis-undecaprenyl diphospho-N-acetyl-alpha-D-muramoyl-L-alanyl-D-glutamyl-meso-2,6-diaminopimeloyl-D-alanyl-D-alanine + UDP-N-acetyl-alpha-D-glucosamine = di-trans,octa-cis-undecaprenyl diphospho-[N-acetyl-alpha-D-glucosaminyl-(1-&gt;4)]-N-acetyl-alpha-D-muramoyl-L-alanyl-D-glutamyl-meso-2,6-diaminopimeloyl-D-alanyl-D-alanine + UDP + H(+). It participates in cell wall biogenesis; peptidoglycan biosynthesis. Cell wall formation. Catalyzes the transfer of a GlcNAc subunit on undecaprenyl-pyrophosphoryl-MurNAc-pentapeptide (lipid intermediate I) to form undecaprenyl-pyrophosphoryl-MurNAc-(pentapeptide)GlcNAc (lipid intermediate II). The protein is UDP-N-acetylglucosamine--N-acetylmuramyl-(pentapeptide) pyrophosphoryl-undecaprenol N-acetylglucosamine transferase of Amoebophilus asiaticus (strain 5a2).